A 345-amino-acid chain; its full sequence is Biotin synthase (345 aa).

The region spanning 38–256 is the Radical SAM core domain; it reads RQVQVSTLLS…IAVARIMMPS (219 aa). [4Fe-4S] cluster contacts are provided by cysteine 53, cysteine 57, and cysteine 60. [2Fe-2S] cluster contacts are provided by cysteine 97, cysteine 128, cysteine 188, and arginine 260.

This sequence belongs to the radical SAM superfamily. Biotin synthase family. Homodimer. Requires [4Fe-4S] cluster as cofactor. It depends on [2Fe-2S] cluster as a cofactor.

It catalyses the reaction (4R,5S)-dethiobiotin + (sulfur carrier)-SH + 2 reduced [2Fe-2S]-[ferredoxin] + 2 S-adenosyl-L-methionine = (sulfur carrier)-H + biotin + 2 5'-deoxyadenosine + 2 L-methionine + 2 oxidized [2Fe-2S]-[ferredoxin]. Its pathway is cofactor biosynthesis; biotin biosynthesis; biotin from 7,8-diaminononanoate: step 2/2. In terms of biological role, catalyzes the conversion of dethiobiotin (DTB) to biotin by the insertion of a sulfur atom into dethiobiotin via a radical-based mechanism. The protein is Biotin synthase of Yersinia pseudotuberculosis serotype O:1b (strain IP 31758).